The chain runs to 206 residues: Protein GrpE (206 aa).

Residues 1–64 (MSKKASMHKE…KALEEAQQQA (64 aa)) are disordered. Residues 46–58 (SDAKVQELEKALE) show a composition bias toward basic and acidic residues.

Belongs to the GrpE family. In terms of assembly, homodimer.

The protein localises to the cytoplasm. In terms of biological role, participates actively in the response to hyperosmotic and heat shock by preventing the aggregation of stress-denatured proteins, in association with DnaK and GrpE. It is the nucleotide exchange factor for DnaK and may function as a thermosensor. Unfolded proteins bind initially to DnaJ; upon interaction with the DnaJ-bound protein, DnaK hydrolyzes its bound ATP, resulting in the formation of a stable complex. GrpE releases ADP from DnaK; ATP binding to DnaK triggers the release of the substrate protein, thus completing the reaction cycle. Several rounds of ATP-dependent interactions between DnaJ, DnaK and GrpE are required for fully efficient folding. This chain is Protein GrpE, found in Prosthecochloris aestuarii (strain DSM 271 / SK 413).